The following is a 487-amino-acid chain: Serine/threonine-protein kinase 4 (487 aa).

M1 carries the N-acetylmethionine modification. Position 3 is a phosphothreonine (T3). One can recognise a Protein kinase domain in the interval 30 to 281; it reads FDVLEKLGEG…ATQLLQHPFV (252 aa). ATP contacts are provided by residues 36-44 and K59; that span reads LGEGSYGSV. The active-site Proton acceptor is the D149. Residue T183 is modified to Phosphothreonine; by autocatalysis. Phosphoserine is present on S265. A coiled-coil region spans residues 289 to 311; that stretch reads ILRDLINEAMDVKLKRQEAQQRE. The disordered stretch occupies residues 305 to 334; it reads QEAQQREVDQDDEENSEEDEMDSGTMVRAA. Acidic residues predominate over residues 313–326; sequence DQDDEENSEEDEMD. At S320 the chain carries Phosphoserine. T340 and T367 each carry phosphothreonine. T387 carries the post-translational modification Phosphothreonine; by PKB/AKT1. S410 is modified (phosphoserine). Phosphotyrosine is present on Y433. The region spanning 433–480 is the SARAH domain; sequence YEFLKSWTVEDLQKRLLALDPMMEQEMEEIRQKYRSKRQPILDAIEAK.

It belongs to the protein kinase superfamily. STE Ser/Thr protein kinase family. STE20 subfamily. In terms of assembly, homodimer; mediated via the coiled-coil region. Interacts with NORE1, which inhibits autoactivation. Interacts with and stabilizes SAV1. Interacts with RASSF1. Interacts with FOXO3. Interacts with RASSF2 (via SARAH domain). Interacts with AR, PKB/AKT1, TNNI3 and SIRT1. Interacts with MARK3 and SCRIB in the presence of DLG5. Interacts with DLG5 (via PDZ domain 3). Requires Mg(2+) as cofactor. Autophosphorylated on serine and threonine residues. Phosphorylation at Thr-387 by PKB/AKT1, leads to inhibition of its: kinase activity, nuclear translocation and autophosphorylation at Thr-183. It also diminishes its cleavage by caspases and its ability to phosphorylate FOXO3. In terms of processing, proteolytically cleaved by caspase-3 during apoptosis at Asp-326 resulting in a 37 kDa form. Proteolytic cleavage results in kinase activation and nuclear translocation of the truncated form (MST1/N).

The protein resides in the cytoplasm. It localises to the nucleus. It catalyses the reaction L-seryl-[protein] + ATP = O-phospho-L-seryl-[protein] + ADP + H(+). The catalysed reaction is L-threonyl-[protein] + ATP = O-phospho-L-threonyl-[protein] + ADP + H(+). Inhibited by the C-terminal non-catalytic region. Activated by caspase-cleavage. Full activation also requires homodimerization and autophosphorylation of Thr-183. Activated by RASSF1 which acts by preventing its dephosphorylation. Functionally, stress-activated, pro-apoptotic kinase which, following caspase-cleavage, enters the nucleus and induces chromatin condensation followed by internucleosomal DNA fragmentation. Key component of the Hippo signaling pathway which plays a pivotal role in organ size control and tumor suppression by restricting proliferation and promoting apoptosis. The core of this pathway is composed of a kinase cascade wherein STK3/MST2 and STK4/MST1, in complex with its regulatory protein SAV1, phosphorylates and activates LATS1/2 in complex with its regulatory protein MOB1, which in turn phosphorylates and inactivates YAP1 oncoprotein and WWTR1/TAZ. Phosphorylation of YAP1 by LATS2 inhibits its translocation into the nucleus to regulate cellular genes important for cell proliferation, cell death, and cell migration. STK3/MST2 and STK4/MST1 are required to repress proliferation of mature hepatocytes, to prevent activation of facultative adult liver stem cells (oval cells), and to inhibit tumor formation. Phosphorylates 'Ser-14' of histone H2B (H2BS14ph) during apoptosis. Phosphorylates FOXO3 upon oxidative stress, which results in its nuclear translocation and cell death initiation. Phosphorylates MOBKL1A, MOBKL1B and RASSF2. Phosphorylates TNNI3 (cardiac Tn-I) and alters its binding affinity to TNNC1 (cardiac Tn-C) and TNNT2 (cardiac Tn-T). Phosphorylates FOXO1 on 'Ser-212' and regulates its activation and stimulates transcription of PMAIP1 in a FOXO1-dependent manner. Phosphorylates SIRT1 and inhibits SIRT1-mediated p53/TP53 deacetylation, thereby promoting p53/TP53 dependent transcription and apoptosis upon DNA damage. Acts as an inhibitor of PKB/AKT1. Phosphorylates AR on 'Ser-650' and suppresses its activity by intersecting with PKB/AKT1 signaling and antagonizing formation of AR-chromatin complexes. This is Serine/threonine-protein kinase 4 (Stk4) from Mus musculus (Mouse).